The primary structure comprises 664 residues: Macoilin (664 aa).

4 consecutive transmembrane segments (helical) span residues threonine 28–leucine 48, alanine 75–isoleucine 95, valine 120–phenylalanine 140, and phenylalanine 154–valine 174. The segment covering arginine 253–lysine 265 has biased composition (basic and acidic residues). The disordered stretch occupies residues arginine 253 to asparagine 274. At serine 305 the chain carries Phosphoserine. Residues lysine 320–serine 348 are compositionally biased toward polar residues. Residues lysine 320–asparagine 375 form a disordered region. A glycan (N-linked (GlcNAc...) asparagine) is linked at asparagine 324. At serine 332 the chain carries Phosphoserine. 2 N-linked (GlcNAc...) asparagine glycosylation sites follow: asparagine 340 and asparagine 452. The disordered stretch occupies residues threonine 630–lysine 664. Serine 631 and serine 634 each carry phosphoserine. An N-linked (GlcNAc...) asparagine glycan is attached at asparagine 655.

The protein belongs to the macoilin family. Strong expression in whole nervous system up to 12.5 dpc. Highly expressed in all neuronal differentiation fields from 14.5 dpc to birth, with highest expression in the telencephalic cortical plate and mitral cells in the olfactory bulb, and lower expression in neuronal progenitor zones. Progressively decreased expression in fields of neuron precursor proliferation from 14.5 dpc and virtually undetectable there by 17.5 dpc. No significant expression detected outside the nervous system. After birth, significant expression remains in the cerebellum, olfactory bulb and hippocampus.

It localises to the rough endoplasmic reticulum membrane. Its subcellular location is the nucleus membrane. In terms of biological role, plays a role in the regulation of neuronal activity. In Mus musculus (Mouse), this protein is Macoilin (Maco1).